A 346-amino-acid chain; its full sequence is Ribosomal RNA small subunit methyltransferase H (346 aa).

S-adenosyl-L-methionine-binding positions include 53-55 (GGY), aspartate 70, phenylalanine 97, aspartate 114, and glutamine 121.

The protein belongs to the methyltransferase superfamily. RsmH family.

The protein resides in the cytoplasm. It catalyses the reaction cytidine(1402) in 16S rRNA + S-adenosyl-L-methionine = N(4)-methylcytidine(1402) in 16S rRNA + S-adenosyl-L-homocysteine + H(+). Its function is as follows. Specifically methylates the N4 position of cytidine in position 1402 (C1402) of 16S rRNA. The sequence is that of Ribosomal RNA small subunit methyltransferase H from Bartonella henselae (strain ATCC 49882 / DSM 28221 / CCUG 30454 / Houston 1) (Rochalimaea henselae).